We begin with the raw amino-acid sequence, 294 residues long: Homeobox protein HD1 (294 aa).

The region spanning 197 to 217 is the ELK domain; sequence ELKLELKQGFKSRIEDVREEI. The homeobox; TALE-type DNA-binding region spans 218 to 281; it reads MRKRRAGKLP…NQRKRNWHNN (64 aa).

Belongs to the TALE/KNOX homeobox family. In roots, stems and cotyledons of one-week old seedlings. In mature plants, in young leaves from first level below flowers as well as in flower buds and open flowers.

It is found in the nucleus. Functionally, possible developmental regulator. The protein is Homeobox protein HD1 (HD1) of Brassica napus (Rape).